We begin with the raw amino-acid sequence, 302 residues long: Oxygen-dependent coproporphyrinogen-III oxidase (302 aa).

Ser-94 is a substrate binding site. A divalent metal cation contacts are provided by His-98 and His-108. His-108 acts as the Proton donor in catalysis. Residue 110–112 (NVR) participates in substrate binding. His-147 and His-177 together coordinate a divalent metal cation. The tract at residues 242–277 (YVEFNLVWDRGTLFGLQTGGRTESILMSMPPLVRWE) is important for dimerization. Substrate is bound at residue 260–262 (GGR).

This sequence belongs to the aerobic coproporphyrinogen-III oxidase family. In terms of assembly, homodimer. Requires a divalent metal cation as cofactor.

The protein resides in the cytoplasm. It catalyses the reaction coproporphyrinogen III + O2 + 2 H(+) = protoporphyrinogen IX + 2 CO2 + 2 H2O. It participates in porphyrin-containing compound metabolism; protoporphyrin-IX biosynthesis; protoporphyrinogen-IX from coproporphyrinogen-III (O2 route): step 1/1. Involved in the heme biosynthesis. Catalyzes the aerobic oxidative decarboxylation of propionate groups of rings A and B of coproporphyrinogen-III to yield the vinyl groups in protoporphyrinogen-IX. The chain is Oxygen-dependent coproporphyrinogen-III oxidase from Erwinia tasmaniensis (strain DSM 17950 / CFBP 7177 / CIP 109463 / NCPPB 4357 / Et1/99).